Here is a 513-residue protein sequence, read N- to C-terminus: Carboxyethyl-arginine beta-lactam-synthase (513 aa).

Aspartate 253 and aspartate 351 together coordinate Mg(2+).

It belongs to the asparagine synthetase family. Homodimer. It depends on Mg(2+) as a cofactor.

It catalyses the reaction N(2)-(2-carboxyethyl)-L-arginine + ATP = deoxyamidinoproclavaminate + AMP + diphosphate + H(+). Its pathway is antibiotic biosynthesis; clavulanate biosynthesis; clavulanate from D-glyceraldehyde 3-phosphate and L-arginine: step 2/8. The sequence is that of Carboxyethyl-arginine beta-lactam-synthase (bls) from Streptomyces clavuligerus.